The primary structure comprises 182 residues: UPF0398 protein RBAM_020340 (182 aa).

Belongs to the UPF0398 family.

This Bacillus velezensis (strain DSM 23117 / BGSC 10A6 / LMG 26770 / FZB42) (Bacillus amyloliquefaciens subsp. plantarum) protein is UPF0398 protein RBAM_020340.